Here is a 372-residue protein sequence, read N- to C-terminus: Alanine racemase (372 aa).

Lysine 48 serves as the catalytic Proton acceptor; specific for D-alanine. The residue at position 48 (lysine 48) is an N6-(pyridoxal phosphate)lysine. Position 143 (arginine 143) interacts with substrate. Catalysis depends on tyrosine 268, which acts as the Proton acceptor; specific for L-alanine. Residue methionine 316 coordinates substrate.

It belongs to the alanine racemase family. Pyridoxal 5'-phosphate serves as cofactor.

The catalysed reaction is L-alanine = D-alanine. It functions in the pathway amino-acid biosynthesis; D-alanine biosynthesis; D-alanine from L-alanine: step 1/1. Functionally, catalyzes the interconversion of L-alanine and D-alanine. May also act on other amino acids. The sequence is that of Alanine racemase (alr) from Vibrio vulnificus (strain YJ016).